The sequence spans 197 residues: Cyclin-dependent kinase inhibitor 1B (197 aa).

The span at 1–11 (MSNVRVSNGSP) shows a compositional bias: polar residues. The tract at residues 1-34 (MSNVRVSNGSPSLERMDARQAEHPKPSACRNLFG) is disordered. Residue Ser-10 is modified to Phosphoserine; by UHMK1. Positions 14–25 (ERMDARQAEHPK) are enriched in basic and acidic residues. Residues 51–91 (DMEEASQRKWNFDFQNHKPLEGRYEWQEVERGSLPEFYYRP) are interaction with CDK2. Position 74 is a phosphotyrosine; by SRC (Tyr-74). Residues 86–197 (EFYYRPPRPP…PKKPGLRRQT (112 aa)) are disordered. Tyr-88 carries the post-translational modification Phosphotyrosine; by ABL, LYN, SRC and JAK2. Tyr-89 carries the post-translational modification Phosphotyrosine. Residues 104-113 (QESQDVSGSR) show a composition bias toward polar residues. The short motif at 153–169 (KRPAAEDSSSQNKRANR) is the Nuclear localization signal element. Thr-170 carries the phosphothreonine; by CaMK1 modification. Polar residues predominate over residues 175–186 (SDGSPNAGTVEQ). At Thr-187 the chain carries Phosphothreonine; by PKB/AKT1, CDK1 and CDK2. Position 197 is a phosphothreonine; by CaMK1, PKB/AKT1, RPS6KA1, RPS6KA3 and PIM1 (Thr-197).

This sequence belongs to the CDI family. As to quaternary structure, forms a ternary complex composed of CCNE1, CDK2 and CDKN1B. Interacts directly with CCNE1; the interaction is inhibited by CDK2-dependent phosphorylation on Thr-187. Interacts with COPS5, subunit of the COP9 signalosome complex; the interaction leads to CDKN1B degradation. Interacts with NUP50; the interaction leads to nuclear import and degradation of phosphorylated CDKN1B. Interacts with CCND1 and SNX6. Interacts (Thr-197-phosphorylated form) with 14-3-3 proteins, binds strongly YWHAQ, weakly YWHAE and YWHAH, but not YWHAB nor YWHAZ; the interaction with YWHAQ results in translocation to the cytoplasm. Interacts with AKT1 and LYN; the interactions lead to cytoplasmic mislocation, phosphorylation of CDKN1B and inhibition of cell cycle arrest. Forms a ternary complex with CCNA2 and CDK2; CDKN1B inhibits the kinase activity of CDK2 through conformational rearrangements. Interacts (unphosphorylated form) with CDK2. Forms a complex with CDK2 and SPDYA, but does not directly interact with SPDYA. Forms a ternary complex composed of cyclin D, CDK4 and CDKN1B. Interacts (phosphorylated on Tyr-88 and Tyr-89) with CDK4; the interaction is required for cyclin D and CDK4 complex assembly, induces nuclear translocation and activates the CDK4 kinase activity. Interacts with GRB2. Interacts with PIM1. Identified in a complex with SKP1, SKP2 and CKS1B. Interacts with UHMK1; the interaction leads to cytoplasmic mislocation, phosphorylation of CDKN1B and inhibition of cell cycle arrest. Also interacts with CDK1. Dephosphorylated on Thr-187 by PPM1H, leading to CDKN1B stability. In terms of processing, phosphorylated; phosphorylation occurs on serine, threonine and tyrosine residues. Phosphorylation on Ser-10 is the major site of phosphorylation in resting cells, takes place at the G(0)-G(1) phase and leads to protein stability. Phosphorylation on other sites is greatly enhanced by mitogens, growth factors, MYC and in certain cancer cell lines. The phosphorylated form found in the cytoplasm is inactivate. Phosphorylation on Thr-197 is required for interaction with 14-3-3 proteins. Phosphorylation on Thr-187, by CDK1 and CDK2 leads to protein ubiquitination and proteasomal degradation. Tyrosine phosphorylation promotes this process. Phosphorylation by PKB/AKT1 can be suppressed by LY294002, an inhibitor of the catalytic subunit of PI3K. Phosphorylation on Tyr-88 and Tyr-89 has no effect on binding CDK2, but is required for binding CDK4. Dephosphorylated on tyrosine residues by G-CSF. Dephosphorylated on Thr-187 by PPM1H, leading to CDKN1B stability. Post-translationally, ubiquitinated; in the cytoplasm by the KPC complex (composed of RNF123/KPC1 and UBAC1/KPC2) and, in the nucleus, by SCF(SKP2). The latter requires prior phosphorylation on Thr-187. Ubiquitinated; by a TRIM21-containing SCF(SKP2)-like complex; leads to its degradation. Subject to degradation in the lysosome. Interaction with SNX6 promotes lysosomal degradation.

The protein localises to the nucleus. The protein resides in the cytoplasm. It localises to the endosome. Its function is as follows. Important regulator of cell cycle progression. Inhibits the kinase activity of CDK2 bound to cyclin A, but has little inhibitory activity on CDK2 bound to SPDYA. Involved in G1 arrest. Potent inhibitor of cyclin E- and cyclin A-CDK2 complexes. Forms a complex with cyclin type D-CDK4 complexes and is involved in the assembly, stability, and modulation of CCND1-CDK4 complex activation. Acts either as an inhibitor or an activator of cyclin type D-CDK4 complexes depending on its phosphorylation state and/or stoichometry. The protein is Cyclin-dependent kinase inhibitor 1B (Cdkn1b) of Mus musculus (Mouse).